Consider the following 130-residue polypeptide: Lysozyme C, kidney isozyme (130 aa).

One can recognise a C-type lysozyme domain in the interval 1-130; the sequence is KVFERCELAR…LTSYIQGCGV (130 aa). Intrachain disulfides connect Cys6/Cys128, Cys30/Cys116, Cys65/Cys81, and Cys77/Cys95. Residues Glu35 and Asp53 contribute to the active site.

This sequence belongs to the glycosyl hydrolase 22 family. In terms of assembly, monomer.

It localises to the secreted. It catalyses the reaction Hydrolysis of (1-&gt;4)-beta-linkages between N-acetylmuramic acid and N-acetyl-D-glucosamine residues in a peptidoglycan and between N-acetyl-D-glucosamine residues in chitodextrins.. Lysozymes have primarily a bacteriolytic function; those in tissues and body fluids are associated with the monocyte-macrophage system and enhance the activity of immunoagents. This is Lysozyme C, kidney isozyme from Ovis aries (Sheep).